Here is a 693-residue protein sequence, read N- to C-terminus: Elongation factor G (693 aa).

A tr-type G domain is found at 8 to 282; the sequence is AKTRNIGIMA…AVIDYLPSPL (275 aa). Residues 17 to 24, 81 to 85, and 135 to 138 each bind GTP; these read AHVDAGKT, DTPGH, and NKMD.

The protein belongs to the TRAFAC class translation factor GTPase superfamily. Classic translation factor GTPase family. EF-G/EF-2 subfamily.

It localises to the cytoplasm. Its function is as follows. Catalyzes the GTP-dependent ribosomal translocation step during translation elongation. During this step, the ribosome changes from the pre-translocational (PRE) to the post-translocational (POST) state as the newly formed A-site-bound peptidyl-tRNA and P-site-bound deacylated tRNA move to the P and E sites, respectively. Catalyzes the coordinated movement of the two tRNA molecules, the mRNA and conformational changes in the ribosome. The polypeptide is Elongation factor G (Streptococcus thermophilus (strain CNRZ 1066)).